A 217-amino-acid polypeptide reads, in one-letter code: ATP-binding protein BexA (217 aa).

One can recognise an ABC transporter domain in the interval 2–217 (IRVNNVCKKY…AYQYYNETQK (216 aa)). Residue 38–45 (GRNGAGKS) participates in ATP binding.

Belongs to the ABC transporter superfamily.

Its subcellular location is the cell inner membrane. Putative ATP-binding protein, and an energy-coupling component of capsule polysaccharide export apparatus. In Haemophilus influenzae, this protein is ATP-binding protein BexA (bexA).